The sequence spans 89 residues: Small ribosomal subunit protein uS14A (89 aa).

The protein belongs to the universal ribosomal protein uS14 family. Part of the 30S ribosomal subunit. Contacts proteins S3 and S10.

Its function is as follows. Binds 16S rRNA, required for the assembly of 30S particles and may also be responsible for determining the conformation of the 16S rRNA at the A site. In Staphylococcus epidermidis (strain ATCC 35984 / DSM 28319 / BCRC 17069 / CCUG 31568 / BM 3577 / RP62A), this protein is Small ribosomal subunit protein uS14A.